A 268-amino-acid chain; its full sequence is Diaminopimelate epimerase (268 aa).

Positions 13, 46, and 64 each coordinate substrate. The active-site Proton donor is the Cys73. Substrate contacts are provided by residues 74-75 (GN), Asn148, Asn181, and 199-200 (ER). Cys208 functions as the Proton acceptor in the catalytic mechanism. 209–210 (GT) contacts substrate.

The protein belongs to the diaminopimelate epimerase family. In terms of assembly, homodimer.

The protein localises to the cytoplasm. It carries out the reaction (2S,6S)-2,6-diaminopimelate = meso-2,6-diaminopimelate. The protein operates within amino-acid biosynthesis; L-lysine biosynthesis via DAP pathway; DL-2,6-diaminopimelate from LL-2,6-diaminopimelate: step 1/1. In terms of biological role, catalyzes the stereoinversion of LL-2,6-diaminopimelate (L,L-DAP) to meso-diaminopimelate (meso-DAP), a precursor of L-lysine and an essential component of the bacterial peptidoglycan. The chain is Diaminopimelate epimerase from Sphingopyxis alaskensis (strain DSM 13593 / LMG 18877 / RB2256) (Sphingomonas alaskensis).